A 493-amino-acid chain; its full sequence is Galactose-1-phosphate uridylyltransferase (493 aa).

The protein belongs to the galactose-1-phosphate uridylyltransferase type 2 family.

It is found in the cytoplasm. It catalyses the reaction alpha-D-galactose 1-phosphate + UDP-alpha-D-glucose = alpha-D-glucose 1-phosphate + UDP-alpha-D-galactose. Its pathway is carbohydrate metabolism; galactose metabolism. In Streptococcus thermophilus (strain CNRZ 1066), this protein is Galactose-1-phosphate uridylyltransferase.